Reading from the N-terminus, the 163-residue chain is GPI-anchored protein LLG2 (163 aa).

Positions 1–23 are cleaved as a signal peptide; it reads MEISPYCLLSLLPIFLLSGFSLS. N52 is a glycosylation site (N-linked (GlcNAc...) asparagine). S135 carries the GPI-anchor amidated serine lipid modification. A propeptide spans 136–163 (removed in mature form); that stretch reads DSIPRASTTASLAVLSTFLVLCLLFLSS.

Expressed in pollen, pollen tubes, sporophytic pistil tissues, in the early stages of female gametophyte development, and in unfertilized, mature ovules.

Its subcellular location is the cell membrane. The polypeptide is GPI-anchored protein LLG2 (Arabidopsis thaliana (Mouse-ear cress)).